A 506-amino-acid polypeptide reads, in one-letter code: Cysteine--tRNA ligase (506 aa).

Cys34 lines the Zn(2+) pocket. Positions 36–46 match the 'HIGH' region motif; it reads PTVYDFAHIGN. Residues Cys230, His269, and Glu273 each coordinate Zn(2+). A 'KMSKS' region motif is present at residues 302–306; that stretch reads KMSKS. Lys305 is a binding site for ATP.

The protein belongs to the class-I aminoacyl-tRNA synthetase family. Monomer. Requires Zn(2+) as cofactor.

The protein localises to the cytoplasm. It carries out the reaction tRNA(Cys) + L-cysteine + ATP = L-cysteinyl-tRNA(Cys) + AMP + diphosphate. The protein is Cysteine--tRNA ligase of Brucella melitensis biotype 2 (strain ATCC 23457).